The chain runs to 386 residues: Innexin inx4 (386 aa).

Residues 1-21 are Cytoplasmic-facing; the sequence is MLEFVRPLQSILQIKQVNSTD. The chain crosses the membrane as a helical span at residues 22-42; the sequence is LVWRLHCRVTVFLLLLASLLL. At 43-111 the chain is on the extracellular side; the sequence is SARQYFGNPI…ESERSYQKYY (69 aa). The helical transmembrane segment at 112–132 threads the bilayer; sequence QWVVFILALQACMFSVPNFLW. Over 133-187 the chain is Cytoplasmic; sequence KAWEAGRLQSLCDGLTTPIVPDHWEKTRKKQLITYLSADFPRLHRTYLLRYCFCT. The chain crosses the membrane as a helical span at residues 188 to 208; the sequence is LLNFCNVLLNIFLVNVIFSGF. The Extracellular portion of the chain corresponds to 209 to 272; the sequence is WSNYHPAVKA…LNVVNEKIFA (64 aa). Residues 273–293 form a helical membrane-spanning segment; it reads FIWLWFLGLLVISMLNLLFWI. The Cytoplasmic segment spans residues 294-386; it reads VVLCSKGFRL…DPEGYDEEGV (93 aa). The segment at 358 to 386 is disordered; sequence HNGHKTFRMPKGGEPDFYTDPEGYDEEGV. Residues 374-386 show a composition bias toward acidic residues; sequence FYTDPEGYDEEGV.

It belongs to the pannexin family.

It is found in the cell membrane. Its subcellular location is the cell junction. The protein localises to the gap junction. Functionally, structural component of gap junctions. Required for normal development of ovary. Required for normal egg production after blood meal. Required for normal development of testis. Its function is as follows. (Microbial infection) Modulates the development of Plasmodium falciparum oocysts. This Anopheles gambiae (African malaria mosquito) protein is Innexin inx4.